A 208-amino-acid polypeptide reads, in one-letter code: Large ribosomal subunit protein uL3 (208 aa).

The tract at residues 123-147 is disordered; that stretch reads RHGQSRGPMAHGSRYHRRPGSMGPV.

The protein belongs to the universal ribosomal protein uL3 family. In terms of assembly, part of the 50S ribosomal subunit. Forms a cluster with proteins L14 and L19.

One of the primary rRNA binding proteins, it binds directly near the 3'-end of the 23S rRNA, where it nucleates assembly of the 50S subunit. This Streptococcus gordonii (strain Challis / ATCC 35105 / BCRC 15272 / CH1 / DL1 / V288) protein is Large ribosomal subunit protein uL3.